A 348-amino-acid chain; its full sequence is Putative methylthioribose-1-phosphate isomerase (348 aa).

Substrate contacts are provided by residues 55–57 (RGA), Arg-98, and Gln-203. The active-site Proton donor is the Asp-244. A substrate-binding site is contributed by 253 to 254 (NK).

Belongs to the eIF-2B alpha/beta/delta subunits family. MtnA subfamily.

It carries out the reaction 5-(methylsulfanyl)-alpha-D-ribose 1-phosphate = 5-(methylsulfanyl)-D-ribulose 1-phosphate. In terms of biological role, catalyzes the interconversion of methylthioribose-1-phosphate (MTR-1-P) into methylthioribulose-1-phosphate (MTRu-1-P). The sequence is that of Putative methylthioribose-1-phosphate isomerase from Methanosarcina acetivorans (strain ATCC 35395 / DSM 2834 / JCM 12185 / C2A).